The chain runs to 918 residues: NEDD4-like E3 ubiquitin-protein ligase WWP1 (918 aa).

Positions 1–116 (MATASPRSDT…THNRKLEKVK (116 aa)) constitute a C2 domain. Polar residues-rich tracts occupy residues 150–164 (TNRS…QQNG), 209–219 (NGENTPSSPSQ), and 235–258 (SAPT…STMG). Disordered stretches follow at residues 150-182 (TNRS…PRLP) and 209-360 (NGEN…PHGR). Over residues 266-281 (TTSTSNCTSTTTQEPP) the composition is skewed to low complexity. WW domains are found at residues 345-378 (EALP…RPQP), 377-410 (QPLP…RPTM), 452-485 (GPLP…DPRT), and 492-525 (EPLP…DPRN). Residues 345–525 (EALPSGWEQR…RTTTFKDPRN (181 aa)) form an interaction with ERBB4 region. The tract at residues 345 to 527 (EALPSGWEQR…TTFKDPRNGK (183 aa)) is required for interaction with and ubiquitination of AMOTL2. Required for interaction with YAP1. Residues 584-918 (KPYDLRRRLY…IEETEGFGQE (335 aa)) form the HECT domain. Cys886 acts as the Glycyl thioester intermediate in catalysis.

Interacts with the Crumbs complex components PALS1 and PATJ; interaction with the Crumbs complex is enhanced by WWP1's interaction with AMOTL2 and facilitates WWP1 localization to the plasma membrane. Interaction with the Crumbs complex promotes WWP1 monoubiquitination of AMOTL2, which activates the Hippo signaling pathway. Binds SCNN1A, SCNN1B, SCNN1G, WBP1, WBP2, DRPLA and adenovirus type 2 PIII. Interacts with TGIF. Binds KLF2 AND HIVEP3. Interacts with RNF11. Interacts with SPART. Interacts with NDFIP1 and NDFIP2; this interaction activates the E3 ubiquitin-protein ligase. Interacts with ERBB4 isoforms JM-B CYT-1 and JM-A CYT-1. Does not interact with ERB4 isoform JMA-A CYT-2. Interacts with SMAD1, SMAD2, SMAD3, SMAD5, SMAD6, SMAD7, TGFBR1 and TGFBR2. Associates with the TGFBR1:TGFBR2 receptor complex in presence of SMAD7. Interacts with SKIL isoform 1. Interacts with TP63 isoform 1 and isoform 2. Interacts (via WW domains) with ARRDC1, ARRDC2 and ARRDC3. Post-translationally, auto-ubiquitinated and ubiquitinated by RNF11.

It localises to the cytoplasm. The protein localises to the cell membrane. The protein resides in the nucleus. It is found in the cell junction. It catalyses the reaction S-ubiquitinyl-[E2 ubiquitin-conjugating enzyme]-L-cysteine + [acceptor protein]-L-lysine = [E2 ubiquitin-conjugating enzyme]-L-cysteine + N(6)-ubiquitinyl-[acceptor protein]-L-lysine.. It functions in the pathway protein modification; protein ubiquitination. With respect to regulation, activated by NDFIP1- and NDFIP2-binding. E3 ubiquitin-protein ligase which accepts ubiquitin from an E2 ubiquitin-conjugating enzyme in the form of a thioester and then directly transfers the ubiquitin to targeted substrates. Ubiquitinates and promotes degradation of SMAD2 in response to TGF-beta signaling, which requires interaction with TGIF. Ubiquitinates ERBB4 isoforms JM-A CYT-1 and JM-B CYT-1, KLF2, KLF5 and TP63 and promotes their proteasomal degradation. Ubiquitinates RNF11 without targeting it for degradation. Ubiquitinates and promotes degradation of TGFBR1; the ubiquitination is enhanced by SMAD7. Ubiquitinates SMAD6 and SMAD7. Activates the Hippo signaling pathway in response to cell contact inhibition and recruitment to the Crumbs complex at the cell membrane. Monoubiquitinates AMOTL2 which facilitates its interaction with and activation of LATS2. LATS2 then phosphorylates YAP1, excluding it from the nucleus and therefore ultimately represses YAP1-driven transcription of target genes. In Mus musculus (Mouse), this protein is NEDD4-like E3 ubiquitin-protein ligase WWP1 (Wwp1).